The sequence spans 155 residues: uncharacterized protein (155 aa).

The 62-residue stretch at 4–65 folds into the HTH asnC-type domain; it reads IDEIDEVIVR…VVDPSFFGEF (62 aa). The segment at residues 23 to 42 is a DNA-binding region (H-T-H motif); the sequence is LTELGRKVGLTASAVKNRIE.

This is an uncharacterized protein from Pyrococcus horikoshii (strain ATCC 700860 / DSM 12428 / JCM 9974 / NBRC 100139 / OT-3).